The sequence spans 209 residues: C-type lectin domain family 6 member A (209 aa).

The Cytoplasmic segment spans residues 1–20 (MVQERHPQRKGVCWTLRLWS). Residues 21-43 (TAVISMLLLSTCFIASCMVTYQF) traverse the membrane as a helical; Signal-anchor for type II membrane protein segment. Residues 44–209 (TMEKPNRRLS…SICETKKIYL (166 aa)) lie on the Extracellular side of the membrane. Cystine bridges form between cysteine 64/cysteine 78 and cysteine 79/cysteine 90. Positions 86–203 (FGSSCYLIST…CDSKHNSICE (118 aa)) constitute a C-type lectin domain. The Ca(2+) site is built by valine 116, asparagine 118, and glutamate 122. N-linked (GlcNAc...) asparagine glycosylation occurs at asparagine 131. Residues glutamate 168, asparagine 170, and glutamate 174 each coordinate Ca(2+). Residues 168–170 (EPN), glutamate 174, tryptophan 182, and 190–191 (ND) each bind alpha-D-mannopyranose. A disulfide bridge links cysteine 176 with cysteine 194. Residues asparagine 190, aspartate 191, and glutamate 203 each contribute to the Ca(2+) site.

In terms of assembly, associated with FCER1G. Heterodimer with CLEC4D; this heterodimer forms a pattern recognition receptor (PRR) against fungal infection.

Its subcellular location is the cell membrane. Its function is as follows. Calcium-dependent lectin that acts as a pattern recognition receptor (PRR) of the innate immune system: specifically recognizes and binds alpha-mannans on C.albicans hypheas. Binding of C.albicans alpha-mannans to this receptor complex leads to phosphorylation of the immunoreceptor tyrosine-based activation motif (ITAM) of FCER1G, triggering activation of SYK, CARD9 and NF-kappa-B, consequently driving maturation of antigen-presenting cells and shaping antigen-specific priming of T-cells toward effector T-helper 1 and T-helper 17 cell subtypes. Also recognizes, in a mannose-dependent manner, allergens from house dust mite and fungi, by promoting cysteinyl leukotriene production. Recognizes soluble elements from the eggs of Shistosoma mansoni altering adaptive immune responses. In Rattus norvegicus (Rat), this protein is C-type lectin domain family 6 member A (CLEC6A).